We begin with the raw amino-acid sequence, 170 residues long: Ureidoglycolate lyase (170 aa).

Belongs to the ureidoglycolate lyase family. In terms of assembly, homodimer. Ni(2+) is required as a cofactor.

It catalyses the reaction (S)-ureidoglycolate = urea + glyoxylate. The protein operates within nitrogen metabolism; (S)-allantoin degradation. Functionally, catalyzes the catabolism of the allantoin degradation intermediate (S)-ureidoglycolate, generating urea and glyoxylate. Involved in the utilization of allantoin as nitrogen source. The chain is Ureidoglycolate lyase from Pseudomonas syringae pv. tomato (strain ATCC BAA-871 / DC3000).